Reading from the N-terminus, the 194-residue chain is Adenylate kinase isoenzyme 1 (194 aa).

Met1 is subject to N-acetylmethionine. 18–23 (GSGKGT) serves as a coordination point for ATP. Residue Ser38 is modified to Phosphoserine. The interval 38–67 (STGDLLRAEVSSGSARGKKLSEIMEKGQLV) is NMP. Residues Thr39, Arg44, 65-67 (QLV), 94-97 (GYPR), and Gln101 each bind AMP. The tract at residues 131-141 (KRGETSGRVDD) is LID. Arg132 lines the ATP pocket. AMP-binding residues include Arg138 and Arg149. Gly177 provides a ligand contact to ATP.

The protein belongs to the adenylate kinase family. AK1 subfamily. Monomer. Mg(2+) serves as cofactor.

The protein resides in the cytoplasm. The enzyme catalyses a ribonucleoside 5'-phosphate + ATP = a ribonucleoside 5'-diphosphate + ADP. It carries out the reaction AMP + ATP = 2 ADP. It catalyses the reaction dAMP + ATP = dADP + ADP. The catalysed reaction is dATP + AMP = dADP + ADP. The enzyme catalyses dAMP + dATP = 2 dADP. It carries out the reaction a 2'-deoxyribonucleoside 5'-diphosphate + ATP = a 2'-deoxyribonucleoside 5'-triphosphate + ADP. It catalyses the reaction a ribonucleoside 5'-diphosphate + ATP = a ribonucleoside 5'-triphosphate + ADP. The catalysed reaction is CDP + GTP = CTP + GDP. The enzyme catalyses GDP + ATP = GTP + ADP. It carries out the reaction UDP + ATP = UTP + ADP. It catalyses the reaction GTP + UDP = UTP + GDP. The catalysed reaction is dTDP + GTP = dTTP + GDP. The enzyme catalyses dCDP + GTP = dCTP + GDP. It carries out the reaction dGDP + ATP = dGTP + ADP. It catalyses the reaction dADP + GTP = dATP + GDP. The catalysed reaction is thiamine diphosphate + ADP = thiamine triphosphate + AMP. Its function is as follows. Catalyzes the reversible transfer of the terminal phosphate group between ATP and AMP. Also displays broad nucleoside diphosphate kinase activity. Plays an important role in cellular energy homeostasis and in adenine nucleotide metabolism. Also catalyzes at a very low rate the synthesis of thiamine triphosphate (ThTP) from thiamine diphosphate (ThDP) and ADP. In Oryctolagus cuniculus (Rabbit), this protein is Adenylate kinase isoenzyme 1.